Consider the following 547-residue polypeptide: Chaperonin GroEL (547 aa).

Residues 30 to 33, K51, 87 to 91, G415, and D495 contribute to the ATP site; these read TLGP and DGTTT.

Belongs to the chaperonin (HSP60) family. Forms a cylinder of 14 subunits composed of two heptameric rings stacked back-to-back. Interacts with the co-chaperonin GroES.

It localises to the cytoplasm. It catalyses the reaction ATP + H2O + a folded polypeptide = ADP + phosphate + an unfolded polypeptide.. Its function is as follows. Together with its co-chaperonin GroES, plays an essential role in assisting protein folding. The GroEL-GroES system forms a nano-cage that allows encapsulation of the non-native substrate proteins and provides a physical environment optimized to promote and accelerate protein folding. In Ralstonia nicotianae (strain ATCC BAA-1114 / GMI1000) (Ralstonia solanacearum), this protein is Chaperonin GroEL.